Consider the following 190-residue polypeptide: Probable GTP-binding protein EngB (190 aa).

The EngB-type G domain occupies valine 22–proline 190. Residues glycine 30–serine 37, glycine 56–serine 60, aspartate 74–glycine 77, threonine 141–aspartate 144, and phenylalanine 173–alanine 175 contribute to the GTP site. Residues serine 37 and threonine 58 each contribute to the Mg(2+) site.

Belongs to the TRAFAC class TrmE-Era-EngA-EngB-Septin-like GTPase superfamily. EngB GTPase family. It depends on Mg(2+) as a cofactor.

Functionally, necessary for normal cell division and for the maintenance of normal septation. This chain is Probable GTP-binding protein EngB, found in Kosmotoga olearia (strain ATCC BAA-1733 / DSM 21960 / TBF 19.5.1).